The chain runs to 248 residues: DNA-directed RNA polymerase subunit Rpo3 (248 aa).

The protein belongs to the archaeal Rpo3/eukaryotic RPB3 RNA polymerase subunit family. Part of the RNA polymerase complex.

The protein localises to the cytoplasm. The catalysed reaction is RNA(n) + a ribonucleoside 5'-triphosphate = RNA(n+1) + diphosphate. DNA-dependent RNA polymerase (RNAP) catalyzes the transcription of DNA into RNA using the four ribonucleoside triphosphates as substrates. The protein is DNA-directed RNA polymerase subunit Rpo3 of Halobacterium salinarum (strain ATCC 29341 / DSM 671 / R1).